The sequence spans 270 residues: ATP synthase subunit a (270 aa).

6 helical membrane passes run 27-47 (FWTFHVDTLAWSVVLGLVFIL), 90-110 (IAPLALTIFVWVLLMNLMDLI), 147-166 (VNMTFALSLGVFALMIFYSV), 182-202 (PFNTPWLYWFNFILELVSLIA), 211-231 (LFGNLYAGELIFILIAGTLGV), and 238-258 (FLWAAFHLLVIPLQAFIFMML).

This sequence belongs to the ATPase A chain family. As to quaternary structure, F-type ATPases have 2 components, CF(1) - the catalytic core - and CF(0) - the membrane proton channel. CF(1) has five subunits: alpha(3), beta(3), gamma(1), delta(1), epsilon(1). CF(0) has three main subunits: a(1), b(2) and c(9-12). The alpha and beta chains form an alternating ring which encloses part of the gamma chain. CF(1) is attached to CF(0) by a central stalk formed by the gamma and epsilon chains, while a peripheral stalk is formed by the delta and b chains.

It localises to the cell inner membrane. Functionally, key component of the proton channel; it plays a direct role in the translocation of protons across the membrane. The polypeptide is ATP synthase subunit a (Pseudoalteromonas atlantica (strain T6c / ATCC BAA-1087)).